Here is a 327-residue protein sequence, read N- to C-terminus: Aspartate carbamoyltransferase catalytic subunit (327 aa).

Positions 73 and 74 each coordinate carbamoyl phosphate. Position 101 (lysine 101) interacts with L-aspartate. 3 residues coordinate carbamoyl phosphate: arginine 123, histidine 153, and glutamine 156. L-aspartate is bound by residues arginine 186 and arginine 241. Positions 282 and 283 each coordinate carbamoyl phosphate.

Belongs to the aspartate/ornithine carbamoyltransferase superfamily. ATCase family. In terms of assembly, heterododecamer (2C3:3R2) of six catalytic PyrB chains organized as two trimers (C3), and six regulatory PyrI chains organized as three dimers (R2).

The catalysed reaction is carbamoyl phosphate + L-aspartate = N-carbamoyl-L-aspartate + phosphate + H(+). Its pathway is pyrimidine metabolism; UMP biosynthesis via de novo pathway; (S)-dihydroorotate from bicarbonate: step 2/3. Catalyzes the condensation of carbamoyl phosphate and aspartate to form carbamoyl aspartate and inorganic phosphate, the committed step in the de novo pyrimidine nucleotide biosynthesis pathway. This Acidithiobacillus ferrooxidans (strain ATCC 23270 / DSM 14882 / CIP 104768 / NCIMB 8455) (Ferrobacillus ferrooxidans (strain ATCC 23270)) protein is Aspartate carbamoyltransferase catalytic subunit.